A 505-amino-acid polypeptide reads, in one-letter code: Deoxyguanosinetriphosphate triphosphohydrolase (505 aa).

Positions 66 to 273 constitute an HD domain; that stretch reads RLTHSMEVQQ…MEAADDISYC (208 aa).

The protein belongs to the dGTPase family. Type 1 subfamily. As to quaternary structure, homotetramer. Mg(2+) serves as cofactor.

The enzyme catalyses dGTP + H2O = 2'-deoxyguanosine + triphosphate + H(+). Its function is as follows. dGTPase preferentially hydrolyzes dGTP over the other canonical NTPs. This Escherichia fergusonii (strain ATCC 35469 / DSM 13698 / CCUG 18766 / IAM 14443 / JCM 21226 / LMG 7866 / NBRC 102419 / NCTC 12128 / CDC 0568-73) protein is Deoxyguanosinetriphosphate triphosphohydrolase.